We begin with the raw amino-acid sequence, 126 residues long: Larval cuticle protein 2 (126 aa).

The N-terminal stretch at 1-16 is a signal peptide; it reads MFKFVMVFAVLGLAAA. In terms of domain architecture, Chitin-binding type R&amp;R spans 39 to 100; sequence ADGFDTDLVV…PVGAVLPTPP (62 aa).

Functionally, component of the larval cuticle. This chain is Larval cuticle protein 2 (Lcp2), found in Drosophila miranda (Fruit fly).